An 827-amino-acid polypeptide reads, in one-letter code: Periplasmic nitrate reductase (827 aa).

A signal peptide (tat-type signal) is located at residues 1-32 (MNLSRRDFMKANAALAAASVAGLIIPVKNVNA). Positions 37 to 93 (ITWDKAVCRFCGTGCAVLVGTKDGRVVASQGDPDAEVNRGLNCIKGYFLPKIMYGKD) constitute a 4Fe-4S Mo/W bis-MGD-type domain. [4Fe-4S] cluster-binding residues include Cys-44, Cys-47, Cys-51, and Cys-79. Mo-bis(molybdopterin guanine dinucleotide) contacts are provided by residues Lys-81, Gln-148, Asn-173, Cys-177, 210–217 (WGSNMAEM), 242–246 (STFEH), 261–263 (QSD), Met-372, Gln-376, Asn-482, 508–509 (SD), Lys-531, Asp-558, and 717–726 (TGRILEHWHT). Position 793 (Phe-793) interacts with substrate. Residues Asn-801 and Lys-818 each coordinate Mo-bis(molybdopterin guanine dinucleotide).

Belongs to the prokaryotic molybdopterin-containing oxidoreductase family. NasA/NapA/NarB subfamily. Component of the periplasmic nitrate reductase NapAB complex composed of NapA and NapB. It depends on [4Fe-4S] cluster as a cofactor. Mo-bis(molybdopterin guanine dinucleotide) serves as cofactor. Post-translationally, predicted to be exported by the Tat system. The position of the signal peptide cleavage has not been experimentally proven.

It localises to the periplasm. It carries out the reaction 2 Fe(II)-[cytochrome] + nitrate + 2 H(+) = 2 Fe(III)-[cytochrome] + nitrite + H2O. Functionally, catalytic subunit of the periplasmic nitrate reductase complex NapAB. Receives electrons from NapB and catalyzes the reduction of nitrate to nitrite. The sequence is that of Periplasmic nitrate reductase from Histophilus somni (strain 129Pt) (Haemophilus somnus).